The following is a 177-amino-acid chain: Large ribosomal subunit protein uL5 (177 aa).

Belongs to the universal ribosomal protein uL5 family. Part of the 50S ribosomal subunit; contacts the 5S rRNA and probably tRNA. Forms a bridge to the 30S subunit in the 70S ribosome.

In terms of biological role, this is one of the proteins that bind and probably mediate the attachment of the 5S RNA into the large ribosomal subunit, where it forms part of the central protuberance. In the 70S ribosome it contacts protein S13 of the 30S subunit (bridge B1b), connecting the 2 subunits; this bridge is implicated in subunit movement. May contact the P site tRNA; the 5S rRNA and some of its associated proteins might help stabilize positioning of ribosome-bound tRNAs. This is Large ribosomal subunit protein uL5 from Sulfurisphaera tokodaii (strain DSM 16993 / JCM 10545 / NBRC 100140 / 7) (Sulfolobus tokodaii).